The sequence spans 198 residues: Cytochrome c oxidase assembly protein CtaG (198 aa).

Residues 1–12 lie on the Cytoplasmic side of the membrane; the sequence is MADTGQSDRKER. A helical; Signal-anchor for type II membrane protein membrane pass occupies residues 13 to 35; the sequence is SNGVIVGTCLAFVVGMVGMAYAA. At 36 to 198 the chain is on the periplasmic side; it reads VPLYDMFCRV…QVKSRTENKL (163 aa).

This sequence belongs to the COX11/CtaG family.

Its subcellular location is the cell inner membrane. Exerts its effect at some terminal stage of cytochrome c oxidase synthesis, probably by being involved in the insertion of the copper B into subunit I. The chain is Cytochrome c oxidase assembly protein CtaG from Sinorhizobium medicae (strain WSM419) (Ensifer medicae).